Here is a 280-residue protein sequence, read N- to C-terminus: Cytochrome c1 (280 aa).

The signal sequence occupies residues 1–21 (MKKLLISAVSALVLGSGAALA). Heme c-binding residues include Cys-55, Cys-58, His-59, and Met-205. The chain crosses the membrane as a helical span at residues 249-267 (MGLVAVVMLGLLSVMLYLT).

In terms of assembly, the main subunits of complex b-c1 are: cytochrome b, cytochrome c1 and the Rieske protein. In terms of processing, binds 1 heme c group covalently per subunit.

It localises to the cell membrane. Its function is as follows. Component of the ubiquinol-cytochrome c reductase complex (complex III or cytochrome b-c1 complex), which is a respiratory chain that generates an electrochemical potential coupled to ATP synthesis. c1 functions as an electron donor to cytochrome c. The polypeptide is Cytochrome c1 (petC) (Rhodobacter capsulatus (Rhodopseudomonas capsulata)).